The chain runs to 374 residues: Translocating chain-associated membrane protein 1 (374 aa).

Residues 1-29 (MAIRKKSTKSPPVLSHEFVLQNHADIVSC) lie on the Cytoplasmic side of the membrane. Residues 30–50 (VAMVFLLGLMFEITAKASIIF) traverse the membrane as a helical segment. At 51-76 (VTLQYNVTLPATEEQATESASLYYYG) the chain is on the lumenal side. N-linked (GlcNAc...) asparagine glycosylation is present at asparagine 56. Residues 77 to 97 (IKDLATVFFYMLVAIIIHAVI) traverse the membrane as a helical segment. At 98-121 (QEYMLDKINRRMHFSKTKHSKFNE) the chain is on the cytoplasmic side. Residues 117-326 (SKFNESGQLS…NFQLRRWREH (210 aa)) form the TLC domain. A helical membrane pass occupies residues 122 to 142 (SGQLSAFYLFACVWGTFILIS). At 143–159 (ENYISDPTILWRAYPHN) the chain is on the lumenal side. A helical membrane pass occupies residues 160-180 (LMTFQMKFFYISQLAYWLHAF). Residues 181–192 (PELYFQKTKRED) lie on the Cytoplasmic side of the membrane. A helical membrane pass occupies residues 193–213 (IPRQLVYIGLYLFHIAGAYLL). Position 214 (asparagine 214) is a topological domain, lumenal. The helical transmembrane segment at 215-235 (LNHLGLVLLVLHYFVEFLFHI) threads the bilayer. The Cytoplasmic segment spans residues 236–251 (SRLFYFSNEKYQKGFS). A helical transmembrane segment spans residues 252–272 (LWAVLFVLGRLLTLILSVLTV). Residues 273 to 297 (GFGLARAENQKLDFSTGNFNVLAVR) lie on the Lumenal side of the membrane. A helical membrane pass occupies residues 298–318 (IAVLASICITQAFMVWKFINF). At 319–374 (QLRRWREHSAFQAPAVKKKPTVTKGRSSKKGTENGVNGTLTSNVADSPRNKKEKSS) the chain is on the cytoplasmic side. Residues 334 to 347 (VKKKPTVTKGRSSK) are compositionally biased toward basic residues. The interval 334-374 (VKKKPTVTKGRSSKKGTENGVNGTLTSNVADSPRNKKEKSS) is disordered. Positions 352–363 (NGVNGTLTSNVA) are enriched in polar residues. Serine 365 is subject to Phosphoserine.

It belongs to the TRAM family. As to quaternary structure, interacts with SEC61B. May interact with Derlin-1/DERL1. N-glycosylated.

The protein localises to the endoplasmic reticulum membrane. Its function is as follows. Involved in the translocation of nascent protein chains into or through the endoplasmic reticulum (ER) membrane by facilitating the proper chain positioning at the SEC61 channel. Regulates the exposure of nascent secretory protein chain to the cytosol during translocation into the ER. May affect the phospholipid bilayer in the vicinity of the lateral gate of the SEC61 channel, thereby facilitating ER protein transport. Intimately associates with transmembrane (TM) domain of nascent membrane proteins during the entire integration process into the ER membrane. Associates with the second TM domain of G-protein-coupled receptor opsin/OPSD nascent chain in the ER membrane, which may facilitate its integration into the membrane. Under conditions of ER stress, participates in the disposal of misfolded ER membrane proteins during the unfolded protein response (UPR), an integrated stress response (ISR) pathway, by selectively retrotranslocating misfolded ER-membrane proteins from the ER into the cytosol where they are ubiquitinated and degraded by the proteasome. The sequence is that of Translocating chain-associated membrane protein 1 (TRAM1) from Pongo abelii (Sumatran orangutan).